A 153-amino-acid polypeptide reads, in one-letter code: Protein E6 (153 aa).

2 zinc fingers span residues cysteine 37–cysteine 73 and cysteine 110–cysteine 146.

Belongs to the papillomaviridae E6 protein family. As to quaternary structure, forms homodimers. Interacts with ubiquitin-protein ligase UBE3A/E6-AP; this interaction stimulates UBE3A ubiquitin activity. Interacts with host BAK1.

The protein resides in the host cytoplasm. Its subcellular location is the host nucleus. Functionally, plays a major role in the induction and maintenance of cellular transformation. E6 associates with host UBE3A/E6-AP ubiquitin-protein ligase and modulates its activity. Protects host keratinocytes from apoptosis by mediating the degradation of host BAK1. May also inhibit host immune response. The protein is Protein E6 of Micromys minutus papillomavirus (MmPV).